The following is a 170-amino-acid chain: Shikimate kinase (170 aa).

ATP is bound at residue 11 to 16 (LSGKST). Serine 15 is a Mg(2+) binding site. Aspartate 33, arginine 57, and glycine 79 together coordinate substrate. Arginine 119 contributes to the ATP binding site. Arginine 137 is a binding site for substrate.

Belongs to the shikimate kinase family. As to quaternary structure, monomer. Mg(2+) serves as cofactor.

It localises to the cytoplasm. The catalysed reaction is shikimate + ATP = 3-phosphoshikimate + ADP + H(+). It functions in the pathway metabolic intermediate biosynthesis; chorismate biosynthesis; chorismate from D-erythrose 4-phosphate and phosphoenolpyruvate: step 5/7. Catalyzes the specific phosphorylation of the 3-hydroxyl group of shikimic acid using ATP as a cosubstrate. In Clostridium botulinum (strain Langeland / NCTC 10281 / Type F), this protein is Shikimate kinase.